Reading from the N-terminus, the 111-residue chain is MVSSKLIAPLSDELAKEYGMKRIGIRKDDTVRVMRGDNYGFEGKVTQVFPESGRIAIEGLTRKKADGTPVYIKIHASKVEITKLNTNDPRRKDIINRKASRQKEEQGGKAQ.

The disordered stretch occupies residues N85–Q111. The segment covering D88–Q111 has biased composition (basic and acidic residues).

This sequence belongs to the universal ribosomal protein uL24 family. As to quaternary structure, part of the 50S ribosomal subunit.

Its function is as follows. One of two assembly initiator proteins, it binds directly to the 5'-end of the 23S rRNA, where it nucleates assembly of the 50S subunit. Functionally, located at the polypeptide exit tunnel on the outside of the subunit. This chain is Large ribosomal subunit protein uL24, found in Metallosphaera sedula (strain ATCC 51363 / DSM 5348 / JCM 9185 / NBRC 15509 / TH2).